The following is a 421-amino-acid chain: ATP-dependent RNA helicase RhlB (421 aa).

The Q motif motif lies at 9-37; sequence QKFSDFSLHPKVVEALEKKGFHNCTPIQA. In terms of domain architecture, Helicase ATP-binding spans 40 to 219; that stretch reads LPLTLAGRDV…FEQMNNAEYI (180 aa). Position 53 to 60 (53 to 60) interacts with ATP; the sequence is AQTGTGKT. Residues 165–168 carry the DEAD box motif; the sequence is DEAD. The 146-residue stretch at 245–390 folds into the Helicase C-terminal domain; it reads RLLQTLIEEE…VSKYNPDALM (146 aa). Residues 392-421 form a disordered region; that stretch reads DLPKPLRLTRPRTGNGPRRTGAPRNRRRSG. The segment covering 402–414 has biased composition (low complexity); the sequence is PRTGNGPRRTGAP.

It belongs to the DEAD box helicase family. RhlB subfamily. As to quaternary structure, component of the RNA degradosome, which is a multiprotein complex involved in RNA processing and mRNA degradation.

It is found in the cytoplasm. The catalysed reaction is ATP + H2O = ADP + phosphate + H(+). In terms of biological role, DEAD-box RNA helicase involved in RNA degradation. Has RNA-dependent ATPase activity and unwinds double-stranded RNA. In Shigella dysenteriae serotype 1 (strain Sd197), this protein is ATP-dependent RNA helicase RhlB.